Consider the following 82-residue polypeptide: Myosin light chain alkali (82 aa).

The EF-hand domain maps to 7 to 42; it reads GCYEDFIECLKLYDKEENGTMMLAELQHALLALGES.

In terms of assembly, myosin is a hexamer of 2 heavy chains and 4 light chains.

This chain is Myosin light chain alkali (Mlc1), found in Drosophila mauritiana (Fruit fly).